Consider the following 1057-residue polypeptide: Collagen alpha-1(I) chain (1057 aa).

Q1 carries the pyrrolidone carboxylic acid modification. Residues 1–10 (QLSYGYDEKS) show a composition bias toward basic and acidic residues. A nonhelical region (N-terminal) region spans residues 1–17 (QLSYGYDEKSAGGISVP). Positions 1 to 1057 (QLSYGYDEKS…AHDGGRYYRA (1057 aa)) are disordered. K9 carries the post-translational modification Allysine. S10 bears the Phosphoserine mark. Collagen-like domains are found at residues 18–76 (GPMG…EAGK), 75–134 (GKPG…PGEN), 135–193 (GAPG…AKGE), and 195–252 (GPQG…GFPG). A triple-helical region region spans residues 18-1031 (GPMGPSGPRG…PGPPGPPGPP (1014 aa)). 11 positions are modified to 4-hydroxyproline: P29, P32, P35, P44, P47, P50, P65, P80, P86, P95, and P101. Residues 37 to 56 (PQGFQGPPGEPGEPGASGPM) are compositionally biased toward low complexity. The span at 68–82 (NGDDGEAGKPGRPGE) shows a compositional bias: basic and acidic residues. Residue K104 is modified to 5-hydroxylysine; alternate. O-linked (Gal...) hydroxylysine; alternate glycosylation occurs at K104. S110 carries the phosphoserine modification. Residues 118–134 (DAGPAGPKGEPGSPGEN) show a composition bias toward low complexity. A 4-hydroxyproline mark is found at P128, P131, P137, P146, and P152. Low complexity predominate over residues 157-170 (PAGARGNDGATGAA). The span at 172–184 (PPGPTGPAGPPGF) shows a compositional bias: pro residues. P173, P182, P185, P212, P215, P227, P233, P242, P248, P251, and P266 each carry 4-hydroxyproline. Residues 218-269 (AGAAGPAGNPGADGQPGAKGANGAPGIAGAPGFPGARGPAGPQGPSGAPGPK) show a composition bias toward low complexity. K269 is subject to 5-hydroxylysine. 4-hydroxyproline occurs at positions 275, 278, 290, 292, 299, 314, 320, 323, 329, and 335. Residues 287-296 (KGEPGPIGIQ) are compositionally biased toward low complexity. The segment covering 324 to 333 (GERGGPGSRG) has biased composition (gly residues). Position 344 is a 5-hydroxylysine (K344). 28 positions are modified to 4-hydroxyproline: P353, P362, P368, P374, P383, P386, P395, P404, P410, P422, P431, P440, P443, P461, P479, P485, P491, P497, P503, P509, P521, P530, P542, P554, P557, P563, P569, and P578. The span at 377-403 (KGLTGSPGSPGPDGKTGPPGPAGQDGR) shows a compositional bias: low complexity. The segment covering 412–431 (ARGQAGVMGFPGPKGAAGEP) has biased composition (low complexity). Residues 473-500 (QGPAGSPGFQGLPGPAGPPGEAGKPGEQ) are compositionally biased toward low complexity. Collagen-like domains follow at residues 522–579 (GERG…GLPG) and 555–613 (GAPG…PPGP). Positions 539–566 (NGAPGNDGAKGDAGAPGAPGSQGAPGLQ) are enriched in low complexity. K590 carries the 5-hydroxylysine modification. A 4-hydroxyproline mark is found at P596, P611, and P617. Collagen-like domains are found at residues 618–676 (GDKG…AKGD) and 678–736 (GPPG…PPGP). Over residues 623–637 (AGPSGPAGPTGARGA) the composition is skewed to low complexity. S626 is subject to Phosphoserine. 4-hydroxyproline occurs at positions 638, 644, 647, 656, 662, 680, 689, and 698. Over residues 650-677 (AGFAGPPGADGQPGAKGEPGDAGAKGDA) the composition is skewed to low complexity. K701 is subject to 5-hydroxylysine. Low complexity predominate over residues 706-722 (SAGPPGATGFPGAAGRV). A 4-hydroxyproline mark is found at P710 and P716. P724 carries the post-translational modification 3-hydroxyproline. Residues P725, P734, P737, P758, P764, P767, P776, and P785 each carry the 4-hydroxyproline modification. Residues 751-760 (ETGPAGRPGE) show a composition bias toward low complexity. The segment covering 770–785 (AGEKGSPGADGPAGAP) has biased composition (low complexity). A compositionally biased stretch (gly residues) spans 789–798 (GPQGIGGQRG). 4-hydroxyproline is present on residues P803, P812, P815, P821, P836, P842, P848, P857, P863, and P869. Positions 804-861 (GQRGERGFPGLPGPSGEPGKQGPSGSSGERGPPGPAGPPGLAGPPGESGREGAPGAEG) constitute a Collagen-like 9 domain. Residues 835–845 (PPGPAGPPGLA) are compositionally biased toward pro residues. K872 bears the 5-hydroxylysine mark. Over residues 881–896 (SGPPGAPGAPGAPGPV) the composition is skewed to pro residues. 3 positions are modified to 4-hydroxyproline: P884, P887, and P890. Over residues 917-931 (AGPAGVRGPAGPQGP) the composition is skewed to low complexity. Collagen-like domains follow at residues 918-976 (GPAG…ASGP) and 972-1030 (GASG…PPGP). A compositionally biased stretch (basic and acidic residues) spans 932 to 946 (RGDKGETGEQGDRGL). Residue K935 is modified to 5-hydroxylysine. At K947 the chain carries 5-hydroxylysine; alternate. An O-linked (Gal...) hydroxylysine; alternate glycan is attached at K947. Residues P959, P962, P965, P983, P998, and P1001 each carry the 4-hydroxyproline modification. The segment covering 965-997 (PGEQGPSGASGPAGPRGPPGSAGAPGKDGLNGL) has biased composition (low complexity). 3-hydroxyproline is present on P1003. A 4-hydroxyproline modification is found at P1004. Over residues 1016-1031 (VGPPGPPGPPGPPGPP) the composition is skewed to pro residues. The residue at position 1018 (P1018) is a 3-hydroxyproline. Residue P1019 is modified to 4-hydroxyproline. At P1021 the chain carries 3-hydroxyproline. Position 1022 is a 4-hydroxyproline (P1022). Residue P1024 is modified to 3-hydroxyproline. 4-hydroxyproline occurs at positions 1025, 1028, and 1031. The segment at 1032–1055 (SGAFDFSFLPQPPQEKAHDGGRYY) is nonhelical region (C-terminal). A compositionally biased stretch (basic and acidic residues) spans 1046 to 1057 (EKAHDGGRYYRA). K1047 carries the post-translational modification Allysine.

It belongs to the fibrillar collagen family. In terms of assembly, trimers of one alpha 2(I) and two alpha 1(I) chains. Post-translationally, contains mostly 4-hydroxyproline. Proline residues at the third position of the tripeptide repeating unit (G-X-Y) are hydroxylated in some or all of the chains. Contains 3-hydroxyproline at a few sites. This modification occurs on the first proline residue in the sequence motif Gly-Pro-Hyp, where Hyp is 4-hydroxyproline. In terms of processing, lysine residues at the third position of the tripeptide repeating unit (G-X-Y) are 5-hydroxylated in some or all of the chains. Post-translationally, O-glycosylated on hydroxylated lysine residues. The O-linked glycan consists of a Glc-Gal disaccharide.

The protein localises to the secreted. Its subcellular location is the extracellular space. The protein resides in the extracellular matrix. Its function is as follows. Type I collagen is a member of group I collagen (fibrillar forming collagen). The sequence is that of Collagen alpha-1(I) chain (COL1A1) from Mammut americanum (American mastodon).